Consider the following 348-residue polypeptide: MKVGVVGASGYVGGETLRLLVNHPNVEITMVTSRQHVGEYLHRVQPSLKGFTDLTFSELDYDKLTDKCDLVFTAVPHGTATEIVKALYDRGIKIIDLSADYRLHDQDAYDKWYGWEHPHPDYLNKSVFGVPELHREEIKKAQLVSCPGCMAVTSMLALAPLIRNNIIDTDHIVVDSKIGSSGAGSGSGTAHAMRAGVIRPYKPAKHRHTGEIEQELSEIAGKKIHVSMSPHAVDVVRGILCTNHTFMQKDMEEKELWKLYRQTYGEEKFVRLIRDKKGLYKFPDPKFLVGSNFCDIGFDLDEDNNRLIALSASDNLMKGAAGSAIQNMNVMCGFDEMDGLRYTPLTPV.

9-12 (SGYV) contributes to the NADP(+) binding site. Cysteine 149 is a catalytic residue. Asparagine 315 provides a ligand contact to NADP(+).

The protein belongs to the NAGSA dehydrogenase family. Type 1 subfamily. LysY sub-subfamily.

The protein localises to the cytoplasm. The enzyme catalyses [amino-group carrier protein]-C-terminal-N-(1-carboxy-5-oxopentan-1-yl)-L-glutamine + phosphate + NADP(+) = [amino-group carrier protein]-C-terminal-N-(1-carboxy-5-phosphooxy-5-oxopentan-1-yl)-L-glutamine + NADPH + H(+). The catalysed reaction is [amino-group carrier protein]-C-terminal-gamma-(L-glutamyl-5-semialdehyde)-L-glutamate + phosphate + NADP(+) = [amino-group carrier protein]-C-terminal-gamma-(5-phospho-L-glutamyl)-L-glutamate + NADPH + H(+). The protein operates within amino-acid biosynthesis; L-lysine biosynthesis via AAA pathway; L-lysine from L-alpha-aminoadipate (Thermus route): step 3/5. It participates in amino-acid biosynthesis; L-arginine biosynthesis. In terms of biological role, involved in both the arginine and lysine biosynthetic pathways. This Nitrosopumilus maritimus (strain SCM1) protein is Putative [LysW]-L-2-aminoadipate/[LysW]-L-glutamate phosphate reductase.